The sequence spans 258 residues: uncharacterized protein (258 aa).

Residues I17, D53, N80, R113, Y145, K149, I178, and S180 each contribute to the NADP(+) site. Y145 (proton donor) is an active-site residue. K149 acts as the Lowers pKa of active site Tyr in catalysis.

This sequence belongs to the short-chain dehydrogenases/reductases (SDR) family.

It localises to the cytoplasm. The protein resides in the nucleus. This is an uncharacterized protein from Schizosaccharomyces pombe (strain 972 / ATCC 24843) (Fission yeast).